The chain runs to 225 residues: PKHD-type hydroxylase KPK_3192 (225 aa).

One can recognise a Fe2OG dioxygenase domain in the interval 78–177 (TISAPLFNRY…RQASFLWIQS (100 aa)). Fe cation contacts are provided by His96, Asp98, and His158. Arg168 provides a ligand contact to 2-oxoglutarate.

Fe(2+) serves as cofactor. The cofactor is L-ascorbate.

This Klebsiella pneumoniae (strain 342) protein is PKHD-type hydroxylase KPK_3192.